The chain runs to 184 residues: MTINNENLIWIDLEMTGLNSEIHRIIEIATVITDTKLNIISEGPVIAIHQKEEHIVIMDEWNTKIHKKNGLIKRVQKSIYNESKAESKTIFFLKKWVPIQSSPICGNSVYQDRKFLARYMPNLENYFHYRCIDVSTIKELVNRWCPSFKKIKKQNHTALEDIHESIIELNFYKKIFFDTIKYSK.

The 162-residue stretch at 8–169 (LIWIDLEMTG…EDIHESIIEL (162 aa)) folds into the Exonuclease domain. Tyr129 is an active-site residue.

It belongs to the oligoribonuclease family.

The protein localises to the cytoplasm. Functionally, 3'-to-5' exoribonuclease specific for small oligoribonucleotides. This Buchnera aphidicola subsp. Schizaphis graminum (strain Sg) protein is Oligoribonuclease.